A 309-amino-acid polypeptide reads, in one-letter code: Porphobilinogen deaminase (309 aa).

Position 244 is an S-(dipyrrolylmethanemethyl)cysteine (Cys-244).

The protein belongs to the HMBS family. In terms of assembly, monomer. The cofactor is dipyrromethane.

The enzyme catalyses 4 porphobilinogen + H2O = hydroxymethylbilane + 4 NH4(+). Its pathway is porphyrin-containing compound metabolism; protoporphyrin-IX biosynthesis; coproporphyrinogen-III from 5-aminolevulinate: step 2/4. Functionally, tetrapolymerization of the monopyrrole PBG into the hydroxymethylbilane pre-uroporphyrinogen in several discrete steps. The polypeptide is Porphobilinogen deaminase (Agrobacterium fabrum (strain C58 / ATCC 33970) (Agrobacterium tumefaciens (strain C58))).